We begin with the raw amino-acid sequence, 357 residues long: Phenylalanine--tRNA ligase alpha subunit (357 aa).

Glu-258 lines the Mg(2+) pocket.

The protein belongs to the class-II aminoacyl-tRNA synthetase family. Phe-tRNA synthetase alpha subunit type 1 subfamily. As to quaternary structure, tetramer of two alpha and two beta subunits. The cofactor is Mg(2+).

It is found in the cytoplasm. It carries out the reaction tRNA(Phe) + L-phenylalanine + ATP = L-phenylalanyl-tRNA(Phe) + AMP + diphosphate + H(+). This chain is Phenylalanine--tRNA ligase alpha subunit, found in Caulobacter vibrioides (strain ATCC 19089 / CIP 103742 / CB 15) (Caulobacter crescentus).